The chain runs to 690 residues: Methionine--tRNA ligase (690 aa).

Positions P20–H30 match the 'HIGH' region motif. Zn(2+) is bound by residues C151, C154, C164, and C167. Positions K337 to S341 match the 'KMSKS' region motif. Residue K340 coordinates ATP. Positions D589 to M690 constitute a tRNA-binding domain.

Belongs to the class-I aminoacyl-tRNA synthetase family. MetG type 1 subfamily. Homodimer. Requires Zn(2+) as cofactor.

It localises to the cytoplasm. The catalysed reaction is tRNA(Met) + L-methionine + ATP = L-methionyl-tRNA(Met) + AMP + diphosphate. Is required not only for elongation of protein synthesis but also for the initiation of all mRNA translation through initiator tRNA(fMet) aminoacylation. In Vibrio vulnificus (strain YJ016), this protein is Methionine--tRNA ligase.